A 161-amino-acid polypeptide reads, in one-letter code: MPALILPLVDAATHWPERGGLVGLDLGTKTIGVAVSNPDRRLATGVETIQRKAFKQDAARLLAIAAERKVVGFVLGLPINMDGSEGPRAQSTRAFARNLANLTTLPIGLWDERLSTAAVERELIGMDVSRAKRAEVIDEHAAIFILQGALDRLANLRTGNG.

The protein belongs to the YqgF nuclease family.

Its subcellular location is the cytoplasm. Functionally, could be a nuclease involved in processing of the 5'-end of pre-16S rRNA. The protein is Putative pre-16S rRNA nuclease of Bradyrhizobium diazoefficiens (strain JCM 10833 / BCRC 13528 / IAM 13628 / NBRC 14792 / USDA 110).